The sequence spans 35 residues: Z-limacoditoxin(1)-Dv1 (35 aa).

A signal peptide spans 1-22 (MKKTFLPIFLVILLASYALANP). Gln23 carries the post-translational modification Pyrrolidone carboxylic acid. A Proline amide modification is found at Pro32.

Belongs to the limacoditoxin-1 (ACP-like) family. As to expression, expressed by the venom secretory cell of the spine. The spine is a cuticular structure containing a single large nucleated venom-secreting cell at its base. It is an independent unit capable of producing, storing and injecting venom. On the back of D.vulnerans caterpillars, spines are grouped together by 50 to 100 to form scoli, of which there are eight in D.vulnerans.

The protein resides in the secreted. In terms of biological role, potently activates insect G protein-coupled receptor. It activates the ACP receptor (ACPR) from the mosquito A.aegypti (EC(50)=0.55 nM) with a potency comparable to that of the endogenous ligand. Has no activity on receptors of the closely related neuropeptides adipokinetic hormone and corazonin. In vivo, does not reveal any observable effects when injected into crickets (A.domesticus). Does not induce increase in intracellular calcium in mouse DRG neurons, suggesting that it does not induce pain. The protein is Z-limacoditoxin(1)-Dv1 of Doratifera vulnerans (Mottled cup moth).